Here is a 110-residue protein sequence, read N- to C-terminus: UPF0122 protein LMOf2365_1829 (110 aa).

Belongs to the UPF0122 family.

Might take part in the signal recognition particle (SRP) pathway. This is inferred from the conservation of its genetic proximity to ftsY/ffh. May be a regulatory protein. The sequence is that of UPF0122 protein LMOf2365_1829 from Listeria monocytogenes serotype 4b (strain F2365).